A 107-amino-acid chain; its full sequence is Probable 4-amino-4-deoxy-L-arabinose-phosphoundecaprenol flippase subunit ArnE (107 aa).

The EamA domain maps to 31–105 (RVWGWLALSL…IIVGIILLGG (75 aa)). Transmembrane regions (helical) follow at residues 34 to 54 (GWLALSLVLLGCAMLLWLFVL), 57 to 77 (VPVSVAYPMLSLNFIFITLAA), and 85 to 105 (IALRHGVGVLLIIVGIILLGG).

Belongs to the ArnE family. As to quaternary structure, heterodimer of ArnE and ArnF.

It localises to the cell inner membrane. It functions in the pathway bacterial outer membrane biogenesis; lipopolysaccharide biosynthesis. Its function is as follows. Translocates 4-amino-4-deoxy-L-arabinose-phosphoundecaprenol (alpha-L-Ara4N-phosphoundecaprenol) from the cytoplasmic to the periplasmic side of the inner membrane. This chain is Probable 4-amino-4-deoxy-L-arabinose-phosphoundecaprenol flippase subunit ArnE, found in Enterobacter sp. (strain 638).